Reading from the N-terminus, the 124-residue chain is MNNLLLVALGGSIGAVFRYLISIFMIQVFGSSFPFGTLLVNVLGSFLMGVIYALGQMSHISPEFKALIGVGLLGALTTFSTFSNETLLLMQEGDWLKAALNVVLNLSLCLFMVYLGQQLVFSRI.

Transmembrane regions (helical) follow at residues L4–F24, F35–G55, I60–S80, and V102–S122. Na(+)-binding residues include G74 and T77.

Belongs to the fluoride channel Fluc/FEX (TC 1.A.43) family.

The protein localises to the cell inner membrane. The enzyme catalyses fluoride(in) = fluoride(out). Na(+) is not transported, but it plays an essential structural role and its presence is essential for fluoride channel function. Its function is as follows. Fluoride-specific ion channel. Important for reducing fluoride concentration in the cell, thus reducing its toxicity. In Shewanella oneidensis (strain ATCC 700550 / JCM 31522 / CIP 106686 / LMG 19005 / NCIMB 14063 / MR-1), this protein is Fluoride-specific ion channel FluC.